Here is a 245-residue protein sequence, read N- to C-terminus: tRNA (guanine-N(1)-)-methyltransferase (245 aa).

Residues Gly114 and 133–138 (IGDYVL) contribute to the S-adenosyl-L-methionine site.

Belongs to the RNA methyltransferase TrmD family. As to quaternary structure, homodimer.

The protein localises to the cytoplasm. It catalyses the reaction guanosine(37) in tRNA + S-adenosyl-L-methionine = N(1)-methylguanosine(37) in tRNA + S-adenosyl-L-homocysteine + H(+). Functionally, specifically methylates guanosine-37 in various tRNAs. This Prochlorococcus marinus (strain MIT 9312) protein is tRNA (guanine-N(1)-)-methyltransferase.